A 375-amino-acid polypeptide reads, in one-letter code: Growth/differentiation factor 8 (375 aa).

Residues 1 to 18 (MQKLQISVYIYLFMLIVA) form the signal peptide. Residues 19–266 (GPVDLNENSE…VTDTPKRSRR (248 aa)) constitute a propeptide that is removed on maturation. Residues Asn-47 and Asn-71 are each glycosylated (N-linked (GlcNAc...) asparagine). Disulfide bonds link Cys-272–Cys-282, Cys-281–Cys-340, Cys-309–Cys-372, and Cys-313–Cys-374.

This sequence belongs to the TGF-beta family. As to quaternary structure, homodimer; disulfide-linked. Interacts with WFIKKN2, leading to inhibit its activity. Interacts with FSTL3. Post-translationally, synthesized as large precursor molecule that undergoes proteolytic cleavage to generate an N-terminal propeptide and a disulfide linked C-terminal dimer, which is the biologically active molecule. The circulating form consists of a latent complex of the C-terminal dimer and other proteins, including its propeptide, which maintain the C-terminal dimer in a latent, inactive state. Ligand activation requires additional cleavage of the prodomain by a tolloid-like metalloproteinase.

The protein resides in the secreted. In terms of biological role, acts specifically as a negative regulator of skeletal muscle growth. The chain is Growth/differentiation factor 8 (MSTN) from Bubalus bubalis (Domestic water buffalo).